The following is a 121-amino-acid chain: Small ribosomal subunit protein uS13 (121 aa).

Residues 92 to 121 (RRGLPVRGQNSKNNARTRKGPKRTVANKKK) are disordered. Residues 106–121 (ARTRKGPKRTVANKKK) are compositionally biased toward basic residues.

It belongs to the universal ribosomal protein uS13 family. In terms of assembly, part of the 30S ribosomal subunit. Forms a loose heterodimer with protein S19. Forms two bridges to the 50S subunit in the 70S ribosome.

Functionally, located at the top of the head of the 30S subunit, it contacts several helices of the 16S rRNA. In the 70S ribosome it contacts the 23S rRNA (bridge B1a) and protein L5 of the 50S subunit (bridge B1b), connecting the 2 subunits; these bridges are implicated in subunit movement. Contacts the tRNAs in the A and P-sites. The protein is Small ribosomal subunit protein uS13 of Shouchella clausii (strain KSM-K16) (Alkalihalobacillus clausii).